The primary structure comprises 297 residues: Undecaprenyl-diphosphatase (297 aa).

7 helical membrane passes run 58–78 (PGVAFTAVIQLGSIVAVLSYF), 103–123 (AQMGLGILFGTIPILIGGLLI), 138–158 (LAAIAIVSIVMGLLLGIAEQL), 168–188 (LRLADGLWMGFAQALALIPGV), 208–228 (AARFSFLLGIPAITIAGLVEL), 243–263 (VLAIGTLSSLIFSWLAIAWLL), and 274–294 (FVVYRIIFGGVILTAIATGTL).

It belongs to the UppP family.

The protein resides in the cell inner membrane. The catalysed reaction is di-trans,octa-cis-undecaprenyl diphosphate + H2O = di-trans,octa-cis-undecaprenyl phosphate + phosphate + H(+). Functionally, catalyzes the dephosphorylation of undecaprenyl diphosphate (UPP). Confers resistance to bacitracin. This chain is Undecaprenyl-diphosphatase, found in Synechococcus sp. (strain ATCC 27144 / PCC 6301 / SAUG 1402/1) (Anacystis nidulans).